Reading from the N-terminus, the 1045-residue chain is Isoleucine--tRNA ligase (1045 aa).

The short motif at 49-59 is the 'HIGH' region element; it reads PYCSGRIHLGT. The 'KMSKS' region motif lies at 591-595; sequence KMSKS. K594 serves as a coordination point for ATP.

The protein belongs to the class-I aminoacyl-tRNA synthetase family. IleS type 2 subfamily. As to quaternary structure, monomer. Zn(2+) is required as a cofactor.

The protein resides in the cytoplasm. The catalysed reaction is tRNA(Ile) + L-isoleucine + ATP = L-isoleucyl-tRNA(Ile) + AMP + diphosphate. Functionally, catalyzes the attachment of isoleucine to tRNA(Ile). As IleRS can inadvertently accommodate and process structurally similar amino acids such as valine, to avoid such errors it has two additional distinct tRNA(Ile)-dependent editing activities. One activity is designated as 'pretransfer' editing and involves the hydrolysis of activated Val-AMP. The other activity is designated 'posttransfer' editing and involves deacylation of mischarged Val-tRNA(Ile). The sequence is that of Isoleucine--tRNA ligase from Methanothermobacter marburgensis (strain ATCC BAA-927 / DSM 2133 / JCM 14651 / NBRC 100331 / OCM 82 / Marburg) (Methanobacterium thermoautotrophicum).